A 131-amino-acid chain; its full sequence is Fatty acid-binding protein (131 aa).

(5Z,8Z,11Z,14Z)-eicosatetraenoate-binding positions include R106 and 126-128 (RFY). Residues R106 and 126–128 (RFY) contribute to the (9Z)-octadecenoate site.

The protein belongs to the calycin superfamily. Fatty-acid binding protein (FABP) family.

The protein localises to the cytoplasm. FABPs are thought to play a role in the intracellular transport of long-chain fatty acids and their acyl-CoA esters. The polypeptide is Fatty acid-binding protein (Tyrophagus putrescentiae (Mold mite)).